The primary structure comprises 1038 residues: Activated CDC42 kinase 1 (1038 aa).

Residues 1 to 110 form an SAM-like domain region; it reads MQPEEGTGWL…TSPAPGGPAG (110 aa). The tract at residues 90–114 is disordered; that stretch reads PPHHSQSTFRKTSPAPGGPAGEGPL. A Protein kinase domain is found at 126-385; sequence LRLLEKLGDG…PTFVALRDFL (260 aa). Residues 132 to 140 and K158 each bind ATP; that span reads LGDGSFGVV. The active-site Proton acceptor is D252. Y284 carries the post-translational modification Phosphotyrosine; by SRC and autocatalysis. The SH3 domain occupies 388 to 448; that stretch reads AQPTDMRALQ…PRNVVTSVAG (61 aa). A CRIB domain is found at 454–466; it reads ISQPLQNSFIHTG. The segment at 497 to 535 is disordered; sequence LSVELSTSRPPQHLGGVKKPTYDPVSEDQDPLSSDFKRL. Residue Y518 is modified to Phosphotyrosine. The interval 623 to 652 is required for interaction with SRC; sequence DWDARPLPPPPAYDDVAQDEDDFEICSINS. Residues 632 to 635 are required for interaction with NEDD4; that stretch reads PPAY. Disordered regions lie at residues 659-702 and 718-840; these read VPAG…SSAQ and LQAP…GPRA. S724 is subject to Phosphoserine. Positions 733-876 are EBD domain; it reads GDDKPQVPPR…SYLERYQRFL (144 aa). 3 stretches are compositionally biased toward pro residues: residues 738 to 749, 772 to 783, and 794 to 805; these read QVPPRVPIPPRP, PASPPRVPPREP, and PLVPPGSSPLPP. Y827 bears the Phosphotyrosine mark. Omega-N-methylarginine is present on R839. 2 positions are modified to phosphotyrosine: Y859 and Y872. Phosphoserine is present on S881. Positions 917–957 are disordered; that stretch reads LDPKANFSTNNSNPGARPPPPRATARLPQRGCPGDGPEAGR. The UBA domain maps to 958-996; it reads PADKIQMAMVHGVTTEECQAALQCHGWSVQRAAQYLKVE.

Belongs to the protein kinase superfamily. Tyr protein kinase family. As to quaternary structure, interacts with NEDD4 (via WW3 domain). NEDD4L and EGF promote association with NEDD4. Homodimer. Interacts with AR, CDC42, WWASL and WWOX. Interacts with CSPG4 (activated). Interacts with MERTK (activated); stimulates autophosphorylation. May interact (phosphorylated) with HSP90AB1; maintains kinase activity. Interacts with NPHP1. Interacts with SNX9 (via SH3 domain). Interacts with SRC (via SH2 and SH3 domain). Interacts with EGFR, and this interaction is dependent on EGF stimulation and kinase activity of EGFR. Interacts (via kinase domain) with AKT1. Part of a collagen stimulated complex involved in cell migration composed of CDC42, CRK, TNK2 and BCAR1/p130cas. Interacts with BCAR1/p130cas via SH3 domains. Forms complexes with GRB2 and numerous receptor tyrosine kinases (RTK) including LTK, AXL or PDGFRL, in which GRB2 promotes RTK recruitment by TNK2. The cofactor is Mg(2+). Post-translationally, autophosphorylation regulates kinase activity. Phosphorylation on Tyr-518 is required for interaction with SRC and is observed during association with clathrin-coated pits. Polyubiquitinated by NEDD4 and NEDD4L. Degradation can be induced by EGF and is lysosome-dependent. The Tyr-284 phosphorylated form shows a significant increase in expression in breast cancers during the progressive stages i.e. normal to hyperplasia (ADH), ductal carcinoma in situ (DCIS), invasive ductal carcinoma (IDC) and lymph node metastatic (LNMM) stages. It also shows a significant increase in expression in prostate cancers during the progressive stages.

The protein localises to the cell membrane. It is found in the nucleus. The protein resides in the endosome. It localises to the cell junction. Its subcellular location is the adherens junction. The protein localises to the cytoplasmic vesicle membrane. It is found in the cytoplasmic vesicle. The protein resides in the clathrin-coated vesicle. It localises to the membrane. Its subcellular location is the clathrin-coated pit. The protein localises to the cytoplasm. It is found in the perinuclear region. The protein resides in the cytosol. It catalyses the reaction L-tyrosyl-[protein] + ATP = O-phospho-L-tyrosyl-[protein] + ADP + H(+). The enzyme catalyses L-seryl-[protein] + ATP = O-phospho-L-seryl-[protein] + ADP + H(+). The catalysed reaction is L-threonyl-[protein] + ATP = O-phospho-L-threonyl-[protein] + ADP + H(+). Its activity is regulated as follows. Inhibited by AIM-100 (4-amino-5,6-biaryl-furo[2,3-d]pyrimidine), which suppresses activating phosphorylation at Tyr-284. Repressed by dasatinib. Its function is as follows. Non-receptor tyrosine-protein and serine/threonine-protein kinase that is implicated in cell spreading and migration, cell survival, cell growth and proliferation. Transduces extracellular signals to cytosolic and nuclear effectors. Phosphorylates AKT1, AR, MCF2, WASL and WWOX. Implicated in trafficking and clathrin-mediated endocytosis through binding to epidermal growth factor receptor (EGFR) and clathrin. Binds to both poly- and mono-ubiquitin and regulates ligand-induced degradation of EGFR, thereby contributing to the accumulation of EGFR at the limiting membrane of early endosomes. Downstream effector of CDC42 which mediates CDC42-dependent cell migration via phosphorylation of BCAR1. May be involved both in adult synaptic function and plasticity and in brain development. Activates AKT1 by phosphorylating it on 'Tyr-176'. Phosphorylates AR on 'Tyr-267' and 'Tyr-363' thereby promoting its recruitment to androgen-responsive enhancers (AREs). Phosphorylates WWOX on 'Tyr-287'. Phosphorylates MCF2, thereby enhancing its activity as a guanine nucleotide exchange factor (GEF) toward Rho family proteins. Contributes to the control of AXL receptor levels. Confers metastatic properties on cancer cells and promotes tumor growth by negatively regulating tumor suppressor such as WWOX and positively regulating pro-survival factors such as AKT1 and AR. Phosphorylates WASP. This is Activated CDC42 kinase 1 (TNK2) from Homo sapiens (Human).